A 402-amino-acid chain; its full sequence is UPF0261 protein y4oU (402 aa).

This sequence belongs to the UPF0261 family.

The sequence is that of UPF0261 protein y4oU from Sinorhizobium fredii (strain NBRC 101917 / NGR234).